Reading from the N-terminus, the 600-residue chain is E3 ubiquitin-protein ligase RLIM (600 aa).

An N-acetylmethionine modification is found at Met-1. Positions 1 to 11 (MENSDSNDKGS) are enriched in basic and acidic residues. Disordered regions lie at residues 1–24 (MENS…QMDR), 49–355 (NNLL…ERGG), and 417–497 (SDSE…VTFD). 2 stretches are compositionally biased toward polar residues: residues 103–131 (SVRQ…NPNS) and 140–152 (INVN…QTSE). The residue at position 163 (Ser-163) is a Phosphoserine. A compositionally biased stretch (polar residues) spans 166–175 (NMESSSQRQM). Residues 176–187 (ENSASESASARP) are compositionally biased toward low complexity. Phosphoserine occurs at positions 194, 227, and 229. Residues 213–228 (RSPEHRRTRARAERSR) are compositionally biased toward basic and acidic residues. Polar residues predominate over residues 244–255 (LEQSSENEPEGS). Position 269 is a phosphoserine (Ser-269). Residues 288–306 (SQGTSSSDTGSNSESSGSG) show a composition bias toward low complexity. Residues 322 to 332 (RPGEYRQRDSI) are compositionally biased toward basic and acidic residues. Residues 333–349 (ASRTRSRSQAPNNTVTY) show a composition bias toward polar residues. The span at 448-475 (SGSSSSSSPSPSSSGESSESSSEMFEGS) shows a compositional bias: low complexity. The RING-type zinc finger occupies 546–587 (CSVCITEYTEGNKLRKLPCSHEYHVHCIDRWLSENSTCPICR). A PDZ-binding motif is present at residues 597 to 600 (ESVV).

The protein belongs to the RNF12 family. In terms of assembly, interacts (via N-terminus) with TERF1. Interacts (via C-terminus) with ESR1. Interacts with LIM/homeobox factors such as LHX3. Interacts with LDB1, LDB2 and SIN3A. Interacts with LIMK1.

It is found in the nucleus. It carries out the reaction S-ubiquitinyl-[E2 ubiquitin-conjugating enzyme]-L-cysteine + [acceptor protein]-L-lysine = [E2 ubiquitin-conjugating enzyme]-L-cysteine + N(6)-ubiquitinyl-[acceptor protein]-L-lysine.. Its pathway is protein modification; protein ubiquitination. In terms of biological role, E3 ubiquitin-protein ligase that acts as a negative coregulator for LIM homeodomain transcription factors by mediating the ubiquitination and subsequent degradation of LIM cofactors LDB1 and LDB2 and by mediating the recruitment the SIN3a/histone deacetylase corepressor complex. Ubiquitination and degradation of LIM cofactors LDB1 and LDB2 allows DNA-bound LIM homeodomain transcription factors to interact with other protein partners such as RLIM. Plays a role in telomere length-mediated growth suppression by mediating the ubiquitination and degradation of TERF1. By targeting ZFP42 for degradation, acts as an activator of random inactivation of X chromosome in the embryo, a stochastic process in which one X chromosome is inactivated to minimize sex-related dosage differences of X-encoded genes in somatic cells of female placental mammals. The polypeptide is E3 ubiquitin-protein ligase RLIM (Rlim) (Mus musculus (Mouse)).